The chain runs to 486 residues: ATP-dependent rRNA helicase RRP3 (486 aa).

Positions 1–58 are disordered; that stretch reads MNGAKRRKVAQDTPRNTKPVAQEKPARAEPKPSSDEESEEESATLEEPSAEETAVDAP. Residues 24–34 show a composition bias toward basic and acidic residues; it reads KPARAEPKPSS. The segment covering 35–54 has biased composition (acidic residues); sequence DEESEEESATLEEPSAEETA. Residues 60 to 88 carry the Q motif motif; that stretch reads KTFKDLGVNDALCEACEKLNYKYPTPIQE. The 172-residue stretch at 91 to 262 folds into the Helicase ATP-binding domain; it reads IPVALQGRDI…RASLRDPVKV (172 aa). Residue 104 to 111 coordinates ATP; that stretch reads AETGSGKT. Residues 210–213 carry the DEAD box motif; that stretch reads DEAD. A Helicase C-terminal domain is found at 286 to 434; sequence QKDVHLIYLI…EYPTEKEEVM (149 aa). Basic and acidic residues-rich tracts occupy residues 451 to 460 and 476 to 486; these read MKSFTEERGK and RGRDDMDREEG. Positions 451-486 are disordered; that stretch reads MKSFTEERGKKGSTLKGGRGKKGGKRGRDDMDREEG.

Belongs to the DEAD box helicase family. DDX47/RRP3 subfamily. As to quaternary structure, interacts with the SSU processome.

The protein localises to the nucleus. The catalysed reaction is ATP + H2O = ADP + phosphate + H(+). In terms of biological role, ATP-dependent rRNA helicase required for pre-ribosomal RNA processing. Involved in the maturation of the 35S-pre-rRNA and to its cleavage to mature 18S rRNA. This Gibberella zeae (strain ATCC MYA-4620 / CBS 123657 / FGSC 9075 / NRRL 31084 / PH-1) (Wheat head blight fungus) protein is ATP-dependent rRNA helicase RRP3.